Reading from the N-terminus, the 1640-residue chain is Basal body protein 10 (1640 aa).

A homodimerization region spans residues 11–64 (VLRRKLEALGYSDPLEPASLQLVQKLVEDLVHTTDSYTAVKQQCAKQAQEIAAF). Positions 93–148 (AERHEREAREHYTAVKRLEDTIAELSYWKHAAAEKLASADKENAGLRKRCEELAKL) form a coiled coil. Residues 154–185 (SGAATPQSVAPKISSRSPIRVAPPPSPPRPRQ) are disordered. The segment covering 174-183 (VAPPPSPPRP) has biased composition (pro residues). 10 coiled-coil regions span residues 191–232 (LQAA…RDVE), 260–332 (ILQL…LQDT), 370–411 (VERL…AQSR), 461–722 (FAAL…AEAD), 758–960 (ARQM…AQAA), 1010–1030 (GEAL…LVRE), 1059–1086 (RASA…LAAE), 1129–1282 (INQY…LQAS), 1323–1494 (AKDQ…AERD), and 1523–1557 (AELA…TRAT). A compositionally biased stretch (low complexity) spans 1592–1618 (GQGQVQGPAGTAPAAAAGAPGPQPGQA). The interval 1592-1640 (GQGQVQGPAGTAPAAAAGAPGPQPGQAQAGGFGGAHGGGSISLSGGPRR) is disordered. The segment covering 1619-1631 (QAGGFGGAHGGGS) has biased composition (gly residues).

It belongs to the CEP135/TSGA10 family. Homodimer.

The protein resides in the cytoplasm. The protein localises to the cytoskeleton. It is found in the microtubule organizing center. Its subcellular location is the centrosome. It localises to the centriole. Microtubule-binding protein essential for cytoskeletal organization (e.g. rootlet microtubule bundles) and flagellar basal body/centriole assembly. This is Basal body protein 10 from Chlamydomonas reinhardtii (Chlamydomonas smithii).